Reading from the N-terminus, the 54-residue chain is SPbeta prophage-derived uncharacterized protein YoqE (54 aa).

This Bacillus subtilis (strain 168) protein is SPbeta prophage-derived uncharacterized protein YoqE (yoqE).